Reading from the N-terminus, the 643-residue chain is MADDTGTEEGLGCSGWFCVEAIVDKTTENAISDDEDENVDDSGLDLVDFVDNSTVIHTKQVHAQALLNKQQAHADQEAVQALKRKLLGSPYESPVSDSQHSIDNELSPRLGGLTLCRGSQGAKRRLFQSLENRDSGYGYSEVEVQQTQVEHGHGAVHGTMGNGGAVGSELGVQENEEGSTTSTPTTRVVELLKCKNLHATLLGKFKELFGVSFGDLVRQFKSDKSSCTDWVIAAFGVNHSIAEGFNTLIKADSLYTHIQWLTCTWGMVLLMLIRFKCGKNRTTVSKGLSKLLNIPTNQLLIEPPRLQSVAAAIYWFRSGISNASIVTGDTPEWIQRQTILEHCFADAQFNLTEMVQWAYDNDITEDSDIAYEYAQRADRDSNAAAFLKSNCQAKYVKDCGVMCRHYKKAQMRRMSMGAWIKHRSAKIGDSGDWKPIVKFIRYQQIDFLAFMSAFKKFLHNIPKKSCLVLIGPPNTGKSQFGMSLINFLAGTVISFVNSHSHFWLQPLDSAKIAMLDDATPPCWTYLDIYLRNLLDGNPCSIDRKHKALTVVKCPPLLITSNTDIRTNDKWKYLYSRVSLFEFPNPFPLDTNGNPVYELNDKNWKSFFQRLWSSLEFQESEDEEDYGETGQTFRCVPGTVVRTV.

Residues 83–85 carry the Nuclear localization signal motif; sequence KRK. Serine 89, serine 93, and serine 107 each carry phosphoserine; by host. Positions 106–115 match the Nuclear export signal motif; it reads LSPRLGGLTL. Residues 155–184 form a disordered region; the sequence is AVHGTMGNGGAVGSELGVQENEEGSTTSTP. The tract at residues 180-346 is DNA-binding region; sequence TTSTPTTRVV…QTILEHCFAD (167 aa). Residues 445–595 enclose the SF3 helicase domain; that stretch reads IDFLAFMSAF…FPLDTNGNPV (151 aa). Residue 471 to 478 participates in ATP binding; it reads GPPNTGKS. Lysine 552 participates in a covalent cross-link: Glycyl lysine isopeptide (Lys-Gly) (interchain with G-Cter in SUMO).

It belongs to the papillomaviridae E1 protein family. Can form hexamers. Interacts with E2 protein; this interaction increases E1 DNA binding specificity. Interacts with host DNA polymerase subunit POLA2. Interacts with host single stranded DNA-binding protein RPA1. Interacts with host TOP1; this interaction stimulates the enzymatic activity of TOP1. Post-translationally, phosphorylated. In terms of processing, sumoylated.

Its subcellular location is the host nucleus. The catalysed reaction is Couples ATP hydrolysis with the unwinding of duplex DNA by translocating in the 3'-5' direction.. It catalyses the reaction ATP + H2O = ADP + phosphate + H(+). In terms of biological role, ATP-dependent DNA 3'-5' helicase required for initiation of viral DNA replication. It forms a complex with the viral E2 protein. The E1-E2 complex binds to the replication origin which contains binding sites for both proteins. During the initial step, a dimer of E1 interacts with a dimer of protein E2 leading to a complex that binds the viral origin of replication with high specificity. Then, a second dimer of E1 displaces the E2 dimer in an ATP-dependent manner to form the E1 tetramer. Following this, two E1 monomers are added to each half of the site, which results in the formation of two E1 trimers on the viral ori. Subsequently, two hexamers will be created. The double hexamer acts as a bi-directional helicase machinery and unwinds the viral DNA and then recruits the host DNA polymerase to start replication. The sequence is that of Replication protein E1 from Human papillomavirus 42.